Here is a 251-residue protein sequence, read N- to C-terminus: MRLHSLILLSFLLLATQAFSEKVRKRAKNAPHSTAEEGVEGSAPSLGKAQNKQRSRTSKSLTHGKFVTKDQATCRWAVTEEEQGISLKVQCTQADQEFSCVFAGDPTDCLKHDKDQIYWKQVARTLRKQKNICRNAKSVLKTRVCRKRFPESNLKLVNPNARGNTKPRKEKAEVSAREHNKVQEAVSTEPNRVKEDITLNPAATQTMAIRDPECLEDPDVLNQRKTALEFCGESWSSICTFFLNMLQATSC.

Positions 1 to 20 (MRLHSLILLSFLLLATQAFS) are cleaved as a signal peptide. The tract at residues 25-62 (KRAKNAPHSTAEEGVEGSAPSLGKAQNKQRSRTSKSLT) is disordered. Cystine bridges form between Cys74/Cys91, Cys100/Cys133, and Cys109/Cys145. A disordered region spans residues 160–189 (NARGNTKPRKEKAEVSAREHNKVQEAVSTE). Residues 170-182 (EKAEVSAREHNKV) are compositionally biased toward basic and acidic residues. Ser175 is a glycosylation site (O-linked (GalNAc...) serine). A sufficient for interaction with FGF2 and FGF2-induced effects region spans residues 210–251 (RDPECLEDPDVLNQRKTALEFCGESWSSICTFFLNMLQATSC). 2 disulfide bridges follow: Cys214-Cys251 and Cys231-Cys239.

It belongs to the fibroblast growth factor-binding protein family. In terms of assembly, found in a complex with FGFBP1, FGF1 and FGF2. Interacts with FGF1, FGF7, FGF10, FGF22 and HSPG2. Interacts with FGF2. Expressed in intestine, ovary, lung, placenta and normal and wounded skin.

It is found in the secreted. The protein resides in the extracellular space. The protein localises to the cell membrane. Its function is as follows. Acts as a carrier protein that releases fibroblast-binding factors (FGFs) from the extracellular matrix (EM) storage and thus enhances the mitogenic activity of FGFs. Enhances FGF2 signaling during tissue repair, angiogenesis and in tumor growth. The chain is Fibroblast growth factor-binding protein 1 (Fgfbp1) from Mus musculus (Mouse).